The sequence spans 77 residues: Acyl carrier protein (77 aa).

Positions 2-77 (ASIEKRIKEI…DAIDYITDHT (76 aa)) constitute a Carrier domain. Ser37 bears the O-(pantetheine 4'-phosphoryl)serine mark.

The protein belongs to the acyl carrier protein (ACP) family. 4'-phosphopantetheine is transferred from CoA to a specific serine of apo-ACP by AcpS. This modification is essential for activity because fatty acids are bound in thioester linkage to the sulfhydryl of the prosthetic group.

Its subcellular location is the cytoplasm. It functions in the pathway lipid metabolism; fatty acid biosynthesis. In terms of biological role, carrier of the growing fatty acid chain in fatty acid biosynthesis. The sequence is that of Acyl carrier protein from Geobacter sp. (strain M21).